The primary structure comprises 285 residues: N(G),N(G)-dimethylarginine dimethylaminohydrolase 1 (285 aa).

Alanine 2 bears the N-acetylalanine mark. Leucine 30 contacts substrate. A Phosphoserine modification is found at serine 33. Positions 73, 78, 79, 98, and 145 each coordinate substrate. The active-site Proton donor is the histidine 173. Residue cysteine 222 is modified to S-nitrosocysteine. Valine 268 is a binding site for substrate. S-nitrosocysteine is present on cysteine 274. Cysteine 274 functions as the Nucleophile in the catalytic mechanism. Residue cysteine 274 coordinates Zn(2+).

The protein belongs to the DDAH family. As to quaternary structure, monomer. As to expression, detected in red blood cells (at protein level). Widely distributed, high amounts found in kidney, brain, aorta and pancreas.

The catalysed reaction is N(omega),N(omega)-dimethyl-L-arginine + H2O = dimethylamine + L-citrulline. The enzyme catalyses N(omega)-methyl-L-arginine + H2O = L-citrulline + methylamine. With respect to regulation, inhibited by zinc ions. In terms of biological role, hydrolyzes N(G),N(G)-dimethyl-L-arginine (ADMA) and N(G)-monomethyl-L-arginine (MMA) which act as inhibitors of NOS. Has therefore a role in the regulation of nitric oxide generation. In Rattus norvegicus (Rat), this protein is N(G),N(G)-dimethylarginine dimethylaminohydrolase 1 (Ddah1).